We begin with the raw amino-acid sequence, 304 residues long: Ribonuclease Z (304 aa).

The Zn(2+) site is built by His-63, His-65, Asp-67, His-68, His-141, Asp-208, and His-266. Asp-67 acts as the Proton acceptor in catalysis.

This sequence belongs to the RNase Z family. As to quaternary structure, homodimer. It depends on Zn(2+) as a cofactor.

The catalysed reaction is Endonucleolytic cleavage of RNA, removing extra 3' nucleotides from tRNA precursor, generating 3' termini of tRNAs. A 3'-hydroxy group is left at the tRNA terminus and a 5'-phosphoryl group is left at the trailer molecule.. Its function is as follows. Zinc phosphodiesterase, which displays some tRNA 3'-processing endonuclease activity. Probably involved in tRNA maturation, by removing a 3'-trailer from precursor tRNA. In Chlamydia muridarum (strain MoPn / Nigg), this protein is Ribonuclease Z.